The primary structure comprises 297 residues: Bifunctional protein FolD (297 aa).

Residues 169-171, Ser-196, and Ile-237 each bind NADP(+); that span reads GRS.

This sequence belongs to the tetrahydrofolate dehydrogenase/cyclohydrolase family. In terms of assembly, homodimer.

It carries out the reaction (6R)-5,10-methylene-5,6,7,8-tetrahydrofolate + NADP(+) = (6R)-5,10-methenyltetrahydrofolate + NADPH. The catalysed reaction is (6R)-5,10-methenyltetrahydrofolate + H2O = (6R)-10-formyltetrahydrofolate + H(+). It functions in the pathway one-carbon metabolism; tetrahydrofolate interconversion. Its function is as follows. Catalyzes the oxidation of 5,10-methylenetetrahydrofolate to 5,10-methenyltetrahydrofolate and then the hydrolysis of 5,10-methenyltetrahydrofolate to 10-formyltetrahydrofolate. The polypeptide is Bifunctional protein FolD (Salinibacter ruber (strain DSM 13855 / M31)).